The sequence spans 468 residues: Immunoglobulin superfamily member 21 (468 aa).

Residues 1-24 (MRAAPSLRRASCLLLAAILDLARG) form the signal peptide. Ig-like domains follow at residues 25 to 132 (YLTV…VVLA) and 344 to 429 (PKIM…TRLI). An intrachain disulfide couples cysteine 46 to cysteine 116.

As to quaternary structure, interacts (Ig-like 1 domain) with NRXN2 (via Laminin G-like 1 domain) in a trans-interaction manner. In terms of tissue distribution, expressed in brain.

The protein resides in the postsynaptic cell membrane. Functionally, involved in synaptic inhibition in the brain. Selectively regulates inhibitory presynaptic differentiation through interacting with presynaptic NRXN2. This chain is Immunoglobulin superfamily member 21, found in Rattus norvegicus (Rat).